Consider the following 98-residue polypeptide: NADH-ubiquinone oxidoreductase chain 4L (98 aa).

3 helical membrane passes run 1 to 21 (MSLVYMNIMTAFAVSLTGLLM), 29 to 49 (SLLCLEGMMLSLFIMATLMIL), and 61 to 81 (IILLVFAACEAALGLSLLVMV).

It belongs to the complex I subunit 4L family. Core subunit of respiratory chain NADH dehydrogenase (Complex I) which is composed of 45 different subunits.

The protein localises to the mitochondrion inner membrane. It carries out the reaction a ubiquinone + NADH + 5 H(+)(in) = a ubiquinol + NAD(+) + 4 H(+)(out). In terms of biological role, core subunit of the mitochondrial membrane respiratory chain NADH dehydrogenase (Complex I) which catalyzes electron transfer from NADH through the respiratory chain, using ubiquinone as an electron acceptor. Part of the enzyme membrane arm which is embedded in the lipid bilayer and involved in proton translocation. This is NADH-ubiquinone oxidoreductase chain 4L (MT-ND4L) from Capra hircus (Goat).